A 317-amino-acid chain; its full sequence is Acetyl-coenzyme A carboxylase carboxyl transferase subunit alpha (317 aa).

Residues Lys-37 to Asp-291 enclose the CoA carboxyltransferase C-terminal domain.

The protein belongs to the AccA family. As to quaternary structure, acetyl-CoA carboxylase is a heterohexamer composed of biotin carboxyl carrier protein (AccB), biotin carboxylase (AccC) and two subunits each of ACCase subunit alpha (AccA) and ACCase subunit beta (AccD).

It localises to the cytoplasm. It carries out the reaction N(6)-carboxybiotinyl-L-lysyl-[protein] + acetyl-CoA = N(6)-biotinyl-L-lysyl-[protein] + malonyl-CoA. The protein operates within lipid metabolism; malonyl-CoA biosynthesis; malonyl-CoA from acetyl-CoA: step 1/1. Its function is as follows. Component of the acetyl coenzyme A carboxylase (ACC) complex. First, biotin carboxylase catalyzes the carboxylation of biotin on its carrier protein (BCCP) and then the CO(2) group is transferred by the carboxyltransferase to acetyl-CoA to form malonyl-CoA. In Rhodospirillum centenum (strain ATCC 51521 / SW), this protein is Acetyl-coenzyme A carboxylase carboxyl transferase subunit alpha.